We begin with the raw amino-acid sequence, 119 residues long: Small ribosomal subunit protein uS13 (119 aa).

A disordered region spans residues 94 to 119 (GLPVRGQRTQTNARTRKGPRRGPAGK).

Belongs to the universal ribosomal protein uS13 family. In terms of assembly, part of the 30S ribosomal subunit. Forms a loose heterodimer with protein S19. Forms two bridges to the 50S subunit in the 70S ribosome.

Functionally, located at the top of the head of the 30S subunit, it contacts several helices of the 16S rRNA. In the 70S ribosome it contacts the 23S rRNA (bridge B1a) and protein L5 of the 50S subunit (bridge B1b), connecting the 2 subunits; these bridges are implicated in subunit movement. Contacts the tRNAs in the A and P-sites. The sequence is that of Small ribosomal subunit protein uS13 from Alkalilimnicola ehrlichii (strain ATCC BAA-1101 / DSM 17681 / MLHE-1).